The chain runs to 313 residues: tRNA dimethylallyltransferase (313 aa).

14 to 21 (GPTASGKT) is a binding site for ATP. Substrate is bound at residue 16-21 (TASGKT). Interaction with substrate tRNA regions lie at residues 39 to 42 (DSAL) and 163 to 167 (QRIGR).

This sequence belongs to the IPP transferase family. Monomer. Requires Mg(2+) as cofactor.

The catalysed reaction is adenosine(37) in tRNA + dimethylallyl diphosphate = N(6)-dimethylallyladenosine(37) in tRNA + diphosphate. In terms of biological role, catalyzes the transfer of a dimethylallyl group onto the adenine at position 37 in tRNAs that read codons beginning with uridine, leading to the formation of N6-(dimethylallyl)adenosine (i(6)A). The sequence is that of tRNA dimethylallyltransferase from Thiobacillus denitrificans (strain ATCC 25259 / T1).